Consider the following 807-residue polypeptide: MKIHTTEALMKAEISRRSLMKTSALGSLALASSAFTLPFSQMVRAAEAPVEEKAVWSSCTVNCGSRCLLRLHVKDDTVYWVESDTTGDDVYGNHQVRACLRGRSIRRRMNHPDRLKYPMKRVGKRGEGKFERISWDEALDTISDNLRRILKDYGNEAVHVLYGTGVDGGNITNSNVPYRLMNSCGGFLSRYGSYSTAQISAAMSYMFGANDGNSPDDIANTKLVVMFGNNPAETRMSGGGVTYYVEQARERSNARMIVIDPRYNDTAAGREDEWLPIRPGTDGALACAIAWVLITENMVDQPFLDKYCVGYDEKTLPANAPRNAHYKAYILGEGPDGIAKTPEWAAKITSIPAEKIIQLAREIGSAKPAYICQGWGPQRHSNGEQTSRAIAMLSVLTGNVGINGGNSGVREGSWDLGVEWFPMLENPVKTQISVFTWTDAIDHGTEMTATRDGVRGKEKLDVPIKFLWCYASNTLINQHGDINHTHEVLQDDSKCEMIVGIDHFMTASAKYCDILLPDLMPTEQEDLISHESAGNMGYVILAQPATSAKFERKPIYWMLSEVAKRLGPDVYQTFTEGRSQHEWIKYLHAKTKERNPEMPDYEEMKTTGIFKKKCPEEHYVAFRAFREDPQANPLKTPSGKIEIYSERLAKIADTWELKKDEIIHPLPAYTPGFDGWDDPLRKTYPLQLTGFHYKARTHSSYGNIDVLQQACPQEVWINPIDAQARGIRHGDTVRVFNNNGEMLIAAKVTPRILPGVTAIGQGAWLKADMFGDRVDHGGSINILTSHRPSPLAKGNPSHSNLVQIEKV.

The segment at residues 1-45 (MKIHTTEALMKAEISRRSLMKTSALGSLALASSAFTLPFSQMVRA) is a signal peptide (tat-type signal). The 4Fe-4S Mo/W bis-MGD-type domain maps to 52–113 (EKAVWSSCTV…SIRRRMNHPD (62 aa)). Residues Cys-59, Cys-63, Cys-67, and Cys-99 each coordinate [4Fe-4S] cluster. Ser-195 contacts Mo-bis(molybdopterin guanine dinucleotide).

Belongs to the prokaryotic molybdopterin-containing oxidoreductase family. The complex consists of three subunits: YnfF, the reductase; YnfG, an electron transfer protein, and YnfH, a membrane anchor protein. Requires [4Fe-4S] cluster as cofactor. The cofactor is Mo-bis(molybdopterin guanine dinucleotide). In terms of processing, exported by the Tat system. The position of the signal peptide cleavage has not been experimentally proven. Can also be exported by the Sec system.

Its subcellular location is the cell membrane. Functionally, terminal reductase during anaerobic growth on various sulfoxide and N-oxide compounds. The polypeptide is Probable dimethyl sulfoxide reductase chain YnfF (ynfF) (Escherichia coli (strain K12)).